The primary structure comprises 399 residues: Glutathione S-transferase LANCL1 (399 aa).

A2 carries the post-translational modification N-acetylalanine. K142 carries the N6-acetyllysine modification. Zn(2+) is bound at residue C276. K317 is a binding site for glutathione. Positions 322 and 323 each coordinate Zn(2+). Residue 364–367 coordinates glutathione; it reads RTPD.

This sequence belongs to the LanC-like protein family. Interacts with the C-terminal of STOM. Interacts with the EPS8 SH3 domain. Interaction with EPS8 is inhibited by glutathione binding. As to quaternary structure, (Microbial infection) Interacts with P.falciparum SBP1. As to expression, detected in erythrocytes, brain, kidney, testis, ovary, heart, lung, placenta and spleen (at protein level). Ubiquitous. Strongly expressed in brain, spinal cord, pituitary gland, kidney, heart, skeletal muscle, pancreas, ovary and testis.

It is found in the cytoplasm. The protein resides in the cell membrane. The catalysed reaction is RX + glutathione = an S-substituted glutathione + a halide anion + H(+). It carries out the reaction 1-chloro-2,4-dinitrobenzene + glutathione = 2,4-dinitrophenyl-S-glutathione + chloride + H(+). Functions as a glutathione transferase. Catalyzes conjugation of the glutathione (GSH) to artificial substrates 1-chloro-2,4-dinitrobenzene (CDNB) and p-nitrophenyl acetate. Mitigates neuronal oxidative stress during normal postnatal development and in response to oxidative stresses probably through GSH antioxidant defense mechanism. May play a role in EPS8 signaling. Binds glutathione. The sequence is that of Glutathione S-transferase LANCL1 from Homo sapiens (Human).